The primary structure comprises 189 residues: Pyridoxal 5'-phosphate synthase subunit PdxT (189 aa).

L-glutamine is bound at residue 46-48; the sequence is GES. Residue cysteine 78 is the Nucleophile of the active site. Residues arginine 107 and 136-137 each bind L-glutamine; that span reads IR. Active-site charge relay system residues include histidine 173 and glutamate 175.

This sequence belongs to the glutaminase PdxT/SNO family. In the presence of PdxS, forms a dodecamer of heterodimers. Only shows activity in the heterodimer.

The enzyme catalyses aldehydo-D-ribose 5-phosphate + D-glyceraldehyde 3-phosphate + L-glutamine = pyridoxal 5'-phosphate + L-glutamate + phosphate + 3 H2O + H(+). It catalyses the reaction L-glutamine + H2O = L-glutamate + NH4(+). Its pathway is cofactor biosynthesis; pyridoxal 5'-phosphate biosynthesis. Functionally, catalyzes the hydrolysis of glutamine to glutamate and ammonia as part of the biosynthesis of pyridoxal 5'-phosphate. The resulting ammonia molecule is channeled to the active site of PdxS. The polypeptide is Pyridoxal 5'-phosphate synthase subunit PdxT (Roseiflexus castenholzii (strain DSM 13941 / HLO8)).